The chain runs to 367 residues: Flagellin 2 (367 aa).

Belongs to the bacterial flagellin family.

The protein localises to the secreted. Its subcellular location is the bacterial flagellum. Functionally, flagellin is the subunit protein which polymerizes to form the filaments of bacterial flagella. The chain is Flagellin 2 (fliC2) from Proteus mirabilis.